The primary structure comprises 78 residues: Large ribosomal subunit protein bL28 (78 aa).

Belongs to the bacterial ribosomal protein bL28 family.

In Clavibacter michiganensis subsp. michiganensis (strain NCPPB 382), this protein is Large ribosomal subunit protein bL28.